A 313-amino-acid polypeptide reads, in one-letter code: Ribosomal RNA small subunit methyltransferase H (313 aa).

Residues 35 to 37 (GGH), aspartate 55, phenylalanine 79, aspartate 101, and glutamine 108 each bind S-adenosyl-L-methionine.

Belongs to the methyltransferase superfamily. RsmH family.

Its subcellular location is the cytoplasm. It carries out the reaction cytidine(1402) in 16S rRNA + S-adenosyl-L-methionine = N(4)-methylcytidine(1402) in 16S rRNA + S-adenosyl-L-homocysteine + H(+). In terms of biological role, specifically methylates the N4 position of cytidine in position 1402 (C1402) of 16S rRNA. This Erwinia tasmaniensis (strain DSM 17950 / CFBP 7177 / CIP 109463 / NCPPB 4357 / Et1/99) protein is Ribosomal RNA small subunit methyltransferase H.